A 1266-amino-acid polypeptide reads, in one-letter code: MALFRKLFYRKPPDGLLEICDRVFVFDCCFSTDSWEEENYKVYMAGVVNQLQEHFPEASSLVFNFREVGTRSVMADVLSEHGLTIMDYPRHYEGCSLLPVEVMHHFLRSSESWLSLGPNNLLLMHCESGAWPVLAFMLAALLIYRKQYSGESKTLDMIYKQAPRELLRLFSPLNPIPSQLRYLQYVSRRNLVSEWPPLDRALTMDCVILRFIPDVSGQGGFRPMFRIYGQDPFFVDDKKPKLLYTTPKKGKHLRVYKQAECELVKIDINCHVQGDIVIECLSLNDDMEREVMMFRVVFNTAFIRSNILMLNRDEVDTLWHIKEFPKGFRVELLFSDMDAASSVDLMNFSSLEEKDGLPIEVFSKVHEFFNQVDWVDQTDATRNMFQQLAIANAVQEGLDGNSSPRLQGLSPKSIHDIMKHAAIENSAKFKLSSMSEVETIDTPEKPPTDSVKKFIAEDVHSVLQINNQEQNASEDATKLLHQESPSLKLVHHSATVKPLVDDSKSPENAEENFPKSPSAHDGKAISFSPPTPSPPHPVRPQLAQAGAPPPPPPLPAAASKPSEQLQHSVVQATEPLSQGNSWMSLAGSTFQTVPNEKNLITLPPTPPLASTSHASPEPSSKTTNSLLLSPQASPATPTNPSKTVSVDFFGAATSPHLGASDNVASNLGQPARSPPPISNSDKKPALPRPPPPPPPPPMQHSTVTKVPPPPPPAPPAPPTPIVHTSSPPPPPPPPPPPAPPTPQSNGISAMKSSPPAPPAPPRLPTHSASPPPPTAPPPPPLGQTRAPSAPPPPPPKLGTKLSPSGPNVPPTPALPTGPLSSGKGRMLRVNLKNSPAKKLKPYHWLKLTRAVNGSLWAETQMSSEASKAPDIDMTELESLFSASAPEQAGKSRLDSSRGPKPEKVQLIEHRRAYNCEIMLSKVKVPLQDLTNSVLNLEESALDADQVENLIKFCPTREEMELLKGYTGDKDKLGKCELFFLEMMKVPRVETKLRVFSFKMQFTSQISELRNSLGVVNSAAEQVKNSEKFKRIMQTILSLGNALNQGTARGAAVGFKLDSLPKLSETRARNNRMTLMHYLCKILAEKIPEVLDFTKELSSLEPATKIQLKFLAEEMQAINKGLEKVVQELSLSENDGPISHNFNKILKEFLHYAEAEVRSLASLYSGVGRNVDGLILYFGEDPAKCPFEQVVSTLLNFVRLFNRAHEENGKQLEAEAKKNAAEKEKPKTGGLDTEIKKPLNEEVKEEKTKTSGLGKEMSDRLKERTAP.

Positions 9–193 (YRKPPDGLLE…QYVSRRNLVS (185 aa)) constitute a Phosphatase tensin-type domain. Cysteine 126 acts as the Phosphocysteine intermediate in catalysis. The C2 tensin-type domain occupies 199–337 (DRALTMDCVI…FRVELLFSDM (139 aa)). Disordered regions lie at residues 497 to 568 (KPLV…LQHS), 597 to 825 (KNLI…GKGR), 881 to 902 (SASAPEQAGKSRLDSSRGPKPE), and 1210 to 1266 (QLEA…RTAP). The segment covering 529–538 (PPTPSPPHPV) has biased composition (pro residues). Polar residues predominate over residues 617 to 644 (EPSSKTTNSLLLSPQASPATPTNPSKTV). Pro residues-rich tracts occupy residues 686-698 (LPRPPPPPPPPPM), 706-742 (VPPPPPPAPPAPPTPIVHTSSPPPPPPPPPPPAPPTP), 754-781 (PPAPPAPPRLPTHSASPPPPTAPPPPPL), and 806-815 (PNVPPTPALP). Positions 829–1226 (VNLKNSPAKK…KNAAEKEKPK (398 aa)) constitute an FH2 domain. 3 stretches are compositionally biased toward basic and acidic residues: residues 889–902 (GKSRLDSSRGPKPE), 1210–1248 (QLEAEAKKNAAEKEKPKTGGLDTEIKKPLNEEVKEEKTK), and 1255–1266 (EMSDRLKERTAP).

This sequence belongs to the formin-like family. Class-II subfamily.

The chain is Formin-like protein 13 (FH13) from Arabidopsis thaliana (Mouse-ear cress).